A 682-amino-acid polypeptide reads, in one-letter code: T-box brain protein 1 (682 aa).

Disordered regions lie at residues 43–83 (TDNL…RSKL) and 108–127 (SQSS…FPYP). Polar residues predominate over residues 58-68 (GMTNQSDTDNF). Low complexity predominate over residues 108 to 122 (SQSSQPQSAATAPSA). The T-box DNA-binding region spans 213–393 (LWLKFHRHQT…HNPFAKGFRD (181 aa)). Position 408 is a phosphothreonine (Thr-408). Position 410 is a phosphoserine (Ser-410). Disordered regions lie at residues 447 to 483 (PGAG…SPQR) and 588 to 658 (GLAA…KSEV). Residues 462 to 472 (PHTNGLLSPQQ) show a composition bias toward polar residues. At Ser-594 the chain carries Phosphoserine. The span at 619-629 (SSIKSIDSSDS) shows a compositional bias: low complexity. Residue Ser-641 is modified to Phosphoserine.

In terms of assembly, homodimer. Part of a complex containing CASK, TBR1 and TSPYL2; may modulate gene expression in response to neuronal synaptic activity. Interacts with FOXP2. Interacts with FOXP1. Interacts with BCL11A. As to expression, brain.

The protein localises to the nucleus. Transcriptional repressor involved in multiple aspects of cortical development, including neuronal migration, laminar and areal identity, and axonal projection. As transcriptional repressor of FEZF2, it blocks the formation of the corticospinal (CS) tract from layer 6 projection neurons, thereby restricting the origin of CS axons specifically to layer 5 neurons. This chain is T-box brain protein 1 (TBR1), found in Homo sapiens (Human).